We begin with the raw amino-acid sequence, 155 residues long: MVKNTEDKPLAQNKKARHDYEIYETFEAGIVLTGTEIKSVRQAKIQLKDGFARVRNGEVWLSNVHIAPFEQGNIFNVEELRTRKLLLNKKEIAKIDKELSGTGITFIPLKVYLKNGFAKVLMGLARGKKDYDKRESLKRKEQNRDIARQLKAYNR.

The protein belongs to the SmpB family.

The protein localises to the cytoplasm. Its function is as follows. Required for rescue of stalled ribosomes mediated by trans-translation. Binds to transfer-messenger RNA (tmRNA), required for stable association of tmRNA with ribosomes. tmRNA and SmpB together mimic tRNA shape, replacing the anticodon stem-loop with SmpB. tmRNA is encoded by the ssrA gene; the 2 termini fold to resemble tRNA(Ala) and it encodes a 'tag peptide', a short internal open reading frame. During trans-translation Ala-aminoacylated tmRNA acts like a tRNA, entering the A-site of stalled ribosomes, displacing the stalled mRNA. The ribosome then switches to translate the ORF on the tmRNA; the nascent peptide is terminated with the 'tag peptide' encoded by the tmRNA and targeted for degradation. The ribosome is freed to recommence translation, which seems to be the essential function of trans-translation. The polypeptide is SsrA-binding protein (Lactococcus lactis subsp. cremoris (strain MG1363)).